The primary structure comprises 317 residues: Retinol dehydrogenase 16 (317 aa).

Residue 33 to 57 coordinates NAD(+); that stretch reads FITGCDSGFGKLLARQLDARGLRVL. A substrate-binding site is contributed by Ser164. Tyr176 functions as the Proton acceptor in the catalytic mechanism. The helical transmembrane segment at 289–309 threads the bilayer; that stretch reads LLYLPMSYMPTFLVDAIMYWV.

Belongs to the short-chain dehydrogenases/reductases (SDR) family. As to quaternary structure, homodimer. Post-translationally, not N-glycosylated. As to expression, highly expressed in adult liver (at protein level). Detected in endometrium, liver and foreskin. Detected in the spineous layers of adult skin, and at lower levels in basal and granular skin layers. Detected in fetal liver and lung.

The protein localises to the microsome membrane. It is found in the endoplasmic reticulum membrane. It catalyses the reaction all-trans-retinol--[retinol-binding protein] + NAD(+) = all-trans-retinal--[retinol-binding protein] + NADH + H(+). It carries out the reaction all-trans-retinol + NAD(+) = all-trans-retinal + NADH + H(+). The catalysed reaction is 13-cis-retinol + NAD(+) = 13-cis-retinal + NADH + H(+). The enzyme catalyses 11-cis-retinol + NAD(+) = 11-cis-retinal + NADH + H(+). It catalyses the reaction 9-cis-retinol + NAD(+) = 9-cis-retinal + NADH + H(+). It carries out the reaction 5alpha-androstane-3alpha,17beta-diol + NAD(+) = 17beta-hydroxy-5alpha-androstan-3-one + NADH + H(+). The catalysed reaction is androsterone + NAD(+) = 5alpha-androstan-3,17-dione + NADH + H(+). Its pathway is cofactor metabolism; retinol metabolism. With respect to regulation, inhibited by citral, perillyl alcohol, geraniol, farnesol and geranyl geraniol. Its function is as follows. Oxidoreductase with a preference for NAD. Oxidizes all-trans-retinol, 9-cis-retinol, 11-cis-retinol and 13-cis-retinol to the corresponding aldehydes. Has higher activity towards CRBP-bound retinol than with free retinol. Also oxidizes 3-alpha-hydroxysteroids. Oxidizes androstanediol and androsterone to dihydrotestosterone and androstanedione. Can also catalyze the reverse reaction. This Homo sapiens (Human) protein is Retinol dehydrogenase 16.